The primary structure comprises 449 residues: Trigger factor (449 aa).

Residues 172 to 257 enclose the PPIase FKBP-type domain; the sequence is GDRVTVDFVG…LKQVEWAHLP (86 aa).

This sequence belongs to the FKBP-type PPIase family. Tig subfamily.

Its subcellular location is the cytoplasm. The catalysed reaction is [protein]-peptidylproline (omega=180) = [protein]-peptidylproline (omega=0). Functionally, involved in protein export. Acts as a chaperone by maintaining the newly synthesized protein in an open conformation. Functions as a peptidyl-prolyl cis-trans isomerase. The protein is Trigger factor of Ralstonia nicotianae (strain ATCC BAA-1114 / GMI1000) (Ralstonia solanacearum).